A 488-amino-acid chain; its full sequence is Probable cytochrome P450 6u1 (488 aa).

A heme-binding site is contributed by Cys430.

This sequence belongs to the cytochrome P450 family. It depends on heme as a cofactor.

Its subcellular location is the endoplasmic reticulum membrane. The protein localises to the microsome membrane. Its function is as follows. May be involved in the metabolism of insect hormones and in the breakdown of synthetic insecticides. The polypeptide is Probable cytochrome P450 6u1 (Cyp6u1) (Drosophila melanogaster (Fruit fly)).